We begin with the raw amino-acid sequence, 109 residues long: Major allergen I polypeptide chain 2 (109 aa).

The N-terminal stretch at 1 to 17 (MRGALLVLALLVTQALG) is a signal peptide. N50 carries an N-linked (GlcNAc...) asparagine glycan.

Belongs to the secretoglobin family. Heterotetramer composed of two non-covalently linked disulfide-linked heterodimer of chains 1 and 2. As to expression, the long form is preferentially expressed in the salivary gland, while the short form is preferentially expressed in the skin.

It localises to the secreted. The sequence is that of Major allergen I polypeptide chain 2 (CH2) from Felis catus (Cat).